A 1451-amino-acid chain; its full sequence is Dual 3',5'-cyclic-AMP and -GMP phosphodiesterase 11 (1451 aa).

Disordered stretches follow at residues 1-54, 75-100, 125-169, 235-262, and 327-374; these read MGQA…PQIQ, ATTP…GGYG, LPAH…QVQQ, GNDV…GATT, and QHHH…GSGG. Residues 11–21 show a composition bias toward basic residues; that stretch reads RGCRYKNKNKS. A compositionally biased stretch (low complexity) spans 24–45; that stretch reads QQQQQQQQQQQQQQQHQQQQQQ. Residues 77 to 91 are compositionally biased toward polar residues; that stretch reads TPLQFQPTGRMNTEQ. Low complexity-rich tracts occupy residues 135–147 and 160–169; these read SGAA…NGSS and QQQQQYQVQQ. Positions 235-248 are enriched in polar residues; sequence GNDVVSSTSPTHAN. The segment covering 327 to 340 has biased composition (basic residues); sequence QHHHNHAHLHHSQH. The segment covering 341 to 355 has biased composition (low complexity); the sequence is SHYQAGGAVGSSSLG. The segment covering 356-374 has biased composition (gly residues); sequence STGGASGAGGAPSLGGSGG. 2 consecutive GAF domains span residues 419 to 572 and 604 to 754; these read EVRT…GIGL and TIEH…GMGI. A PDEase domain is found at 783-1107; the sequence is ATMDEAHRLR…GHWIDLADVV (325 aa). The Proton donor role is filled by His860. A divalent metal cation contacts are provided by His864, His900, Asp901, and Asp1011. Disordered stretches follow at residues 1109–1171, 1200–1248, 1268–1305, and 1325–1364; these read TKTS…SNTN, DEQA…TPVS, QTSN…QELD, and INNH…IGSA. Composition is skewed to low complexity over residues 1142–1171 and 1218–1234; these read ASEA…SNTN and CRSN…SCLS. A compositionally biased stretch (polar residues) spans 1268-1277; it reads QTSNQAQTQK. The segment covering 1328–1355 has biased composition (basic residues); that stretch reads HSHHHNHSHSHNHNHHHHHHHHSHHNHS.

This sequence belongs to the cyclic nucleotide phosphodiesterase family. A divalent metal cation is required as a cofactor. As to expression, in adults, it is enriched in Malpighian tubules.

The enzyme catalyses 3',5'-cyclic GMP + H2O = GMP + H(+). It catalyses the reaction 3',5'-cyclic AMP + H2O = AMP + H(+). Functionally, plays a role in signal transduction by regulating the intracellular concentration of cyclic nucleotides cAMP and cGMP. Dual-specificity phosphodiesterase that catalyzes the hydrolysis of both cAMP and cGMP to 5'-AMP and 5'-GMP, respectively. This chain is Dual 3',5'-cyclic-AMP and -GMP phosphodiesterase 11 (Pde11), found in Drosophila melanogaster (Fruit fly).